The chain runs to 157 residues: Transcription elongation factor GreA (157 aa).

A coiled-coil region spans residues 12-74; it reads LKKLEEELEY…TLEAMLKNAK (63 aa).

This sequence belongs to the GreA/GreB family.

In terms of biological role, necessary for efficient RNA polymerase transcription elongation past template-encoded arresting sites. The arresting sites in DNA have the property of trapping a certain fraction of elongating RNA polymerases that pass through, resulting in locked ternary complexes. Cleavage of the nascent transcript by cleavage factors such as GreA or GreB allows the resumption of elongation from the new 3'terminus. GreA releases sequences of 2 to 3 nucleotides. The polypeptide is Transcription elongation factor GreA (Thermoanaerobacter pseudethanolicus (strain ATCC 33223 / 39E) (Clostridium thermohydrosulfuricum)).